Reading from the N-terminus, the 697-residue chain is Putative cryptochrome DASH (697 aa).

A Photolyase/cryptochrome alpha/beta domain is found at 5–164 (KLLVYLLRRD…GFKLWHDEKY (160 aa)). 2 disordered regions span residues 170 to 215 (DNGL…FPSW) and 554 to 697 (FSVT…PPHI). Basic and acidic residues predominate over residues 188-198 (KTQEPLRERPR). Basic residues predominate over residues 560-569 (RGNRRPYRWR). The span at 578–590 (GRGGRGGGTGNTS) shows a compositional bias: gly residues. Composition is skewed to low complexity over residues 659 to 675 (QQQQ…YAHQ) and 683 to 697 (RQQQ…PPHI).

It belongs to the DNA photolyase class-1 family. Requires FAD as cofactor. (6R)-5,10-methylene-5,6,7,8-tetrahydrofolate is required as a cofactor.

Functionally, may have a photoreceptor function. This is Putative cryptochrome DASH from Gibberella zeae (strain ATCC MYA-4620 / CBS 123657 / FGSC 9075 / NRRL 31084 / PH-1) (Wheat head blight fungus).